Here is a 355-residue protein sequence, read N- to C-terminus: tRNA pseudouridine synthase D (355 aa).

D84 serves as the catalytic Nucleophile. In terms of domain architecture, TRUD spans 160–306 (GVPNYFGLQR…MAHERRILRL (147 aa)).

The protein belongs to the pseudouridine synthase TruD family.

It carries out the reaction uridine(13) in tRNA = pseudouridine(13) in tRNA. Its function is as follows. Responsible for synthesis of pseudouridine from uracil-13 in transfer RNAs. In Pseudomonas aeruginosa (strain UCBPP-PA14), this protein is tRNA pseudouridine synthase D.